Here is a 361-residue protein sequence, read N- to C-terminus: 3-dehydroquinate synthase (361 aa).

NAD(+) is bound by residues 71–76 (DGEQFK), 105–109 (GVIGD), 129–130 (TT), lysine 142, lysine 151, and 169–172 (CLQT). Positions 184, 247, and 264 each coordinate Zn(2+).

This sequence belongs to the sugar phosphate cyclases superfamily. Dehydroquinate synthase family. Co(2+) serves as cofactor. It depends on Zn(2+) as a cofactor. Requires NAD(+) as cofactor.

The protein localises to the cytoplasm. The catalysed reaction is 7-phospho-2-dehydro-3-deoxy-D-arabino-heptonate = 3-dehydroquinate + phosphate. Its pathway is metabolic intermediate biosynthesis; chorismate biosynthesis; chorismate from D-erythrose 4-phosphate and phosphoenolpyruvate: step 2/7. Catalyzes the conversion of 3-deoxy-D-arabino-heptulosonate 7-phosphate (DAHP) to dehydroquinate (DHQ). The sequence is that of 3-dehydroquinate synthase from Edwardsiella ictaluri (strain 93-146).